Here is a 180-residue protein sequence, read N- to C-terminus: UDP-4-amino-4,6-dideoxy-N-acetyl-beta-L-altrosamine N-acetyltransferase (180 aa).

One can recognise an N-acetyltransferase domain in the interval 13–169 (IDFTNLNDGE…IDVLLYYKDK (157 aa)).

The catalysed reaction is UDP-4-amino-4,6-dideoxy-N-acetyl-beta-L-altrosamine + acetyl-CoA = UDP-2,4-diacetamido-2,4,6-trideoxy-beta-L-altrose + CoA + H(+). In terms of biological role, catalyzes the third step in the biosynthesis of pseudaminic acid, a sialic-acid-like sugar that is used to modify flagellin. Mediates N-4 acetylation of UDP-4-amino-4,6-dideoxy-beta-L-AltNAc to form UDP-2,4-diacetamido-2,4,6-trideoxy-beta-L-altropyranose. This Helicobacter pylori (strain ATCC 700392 / 26695) (Campylobacter pylori) protein is UDP-4-amino-4,6-dideoxy-N-acetyl-beta-L-altrosamine N-acetyltransferase (pseH).